The primary structure comprises 195 residues: Exosome complex component CSL4 (195 aa).

Position 21 is a phosphoserine (S21). Residues 66-147 enclose the S1 motif domain; that stretch reads DVGAVVTCKV…AQSNYLLTTA (82 aa).

It belongs to the CSL4 family. Component of the RNA exosome core complex (Exo-9), composed of EXOSC1, EXOSC2, EXOSC3, EXOSC4, EXOSC5, EXOSC6, EXOSC7, EXOSC8 and EXOSC9; within the complex interacts with EXOSC6. The catalytically inactive RNA exosome core complex (Exo-9) associates with the catalytic subunit EXOSC10/RRP6. Exo-9 may associate with DIS3 to form the nucleolar exosome complex, or DIS3L to form the cytoplasmic exosome complex. Exo-9 is formed by a hexameric base ring consisting of the heterodimers EXOSC4-EXOSC9, EXOSC5-EXOSC8 and EXOSC6-EXOSC7, and a cap ring consisting of EXOSC1, EXOSC2 and EXOSC3. The RNA exosome complex associates with cofactors C1D/RRP47, MPHOSPH6/MPP6 and MTREX/MTR4. Interacts with DDX60.

It is found in the nucleus. The protein localises to the nucleolus. The protein resides in the cytoplasm. In terms of biological role, non-catalytic component of the RNA exosome complex which has 3'-&gt;5' exoribonuclease activity and participates in a multitude of cellular RNA processing and degradation events. In the nucleus, the RNA exosome complex is involved in proper maturation of stable RNA species such as rRNA, snRNA and snoRNA, in the elimination of RNA processing by-products and non-coding 'pervasive' transcripts, such as antisense RNA species and promoter-upstream transcripts (PROMPTs), and of mRNAs with processing defects, thereby limiting or excluding their export to the cytoplasm. The RNA exosome may be involved in Ig class switch recombination (CSR) and/or Ig variable region somatic hypermutation (SHM) by targeting AICDA deamination activity to transcribed dsDNA substrates. In the cytoplasm, the RNA exosome complex is involved in general mRNA turnover and specifically degrades inherently unstable mRNAs containing AU-rich elements (AREs) within their 3' untranslated regions, and in RNA surveillance pathways, preventing translation of aberrant mRNAs. It seems to be involved in degradation of histone mRNA. The catalytic inactive RNA exosome core complex of 9 subunits (Exo-9) is proposed to play a pivotal role in the binding and presentation of RNA for ribonucleolysis, and to serve as a scaffold for the association with catalytic subunits and accessory proteins or complexes. EXOSC1 as peripheral part of the Exo-9 complex stabilizes the hexameric ring of RNase PH-domain subunits through contacts with EXOSC6 and EXOSC8. This chain is Exosome complex component CSL4 (Exosc1), found in Mus musculus (Mouse).